The sequence spans 422 residues: MWEGLWIATAVIAALVVIAALTLGLVLYRRRRISLSPRPERGVVDRSGGYTASSGITFSQTPTTQPAERIDTSGLPAVGDDATVPRDAPKRTIADVHLPEFEPEPQAPEVPEADAIAPPEGRLERLRGRLARSQNALGRGLLGLIGGGDLDEDSWQDVEDTLLVADLGPAATASVVSQLRSRLASGNVRTEADARAVLRDVLINELQPGMDRSIRALPHAGHPSVLLVVGVNGTGKTTTVGKLARVLVADGRRVVLGAADTFRAAAADQLQTWAARVGAAVVRGPEGADPASVAFDAVDKGIAAGADVVLIDTAGRLHTKVGLMDELDKVKRVVTRRASVDEVLLVLDATIGQNGLAQARVFAEVVDISGAVLTKLDGTAKGGIVFRVQQELGVPVKLVGLGEGPDDLAPFEPAAFVDALLG.

The tract at residues 39 to 86 is disordered; the sequence is PERGVVDRSGGYTASSGITFSQTPTTQPAERIDTSGLPAVGDDATVPR. The segment covering 50–66 has biased composition (polar residues); that stretch reads YTASSGITFSQTPTTQP. Residues 230–237, 312–316, and 374–377 each bind GTP; these read GVNGTGKT, DTAGR, and TKLD.

Belongs to the GTP-binding SRP family. FtsY subfamily. In terms of assembly, part of the signal recognition particle protein translocation system, which is composed of SRP and FtsY.

The protein localises to the cell membrane. It localises to the cytoplasm. The enzyme catalyses GTP + H2O = GDP + phosphate + H(+). In terms of biological role, involved in targeting and insertion of nascent membrane proteins into the cytoplasmic membrane. Acts as a receptor for the complex formed by the signal recognition particle (SRP) and the ribosome-nascent chain (RNC). In Mycobacterium bovis (strain ATCC BAA-935 / AF2122/97), this protein is Signal recognition particle receptor FtsY.